Reading from the N-terminus, the 172-residue chain is Protein nemuri (172 aa).

An N-terminal signal peptide occupies residues 1–25; the sequence is MSAKYTLIFALAALCCLVFSTEAAA. Residues 27 to 172 form a disordered region; it reads RSRVLSSRRG…KRRSGKGNKA (146 aa). Basic and acidic residues-rich tracts occupy residues 35–50, 58–90, and 97–108; these read RGSELVEKTSDNKEDS, DLERQEQEEQNDRLEGRSDDVAEGSDNKEDKET, and TIVKPNKDDARA. A coiled-coil region spans residues 45–74; that stretch reads DNKEDSELAAQEQDLERQEQEEQNDRLEGR. The span at 109–172 shows a compositional bias: basic residues; sequence RRIVRAGRRR…KRRSGKGNKA (64 aa).

Detected in the brain where it accumulates in the dorsal fan-shaped body following sleep deprivation (at protein level). Expressed in the adult body.

The protein localises to the secreted. In terms of biological role, antimicrobial protein which is essential for the homeostatic regulation of sleep. Promotes sleep following sleep deprivation or bacterial infection and increases survival following bacterial infection. Likely to promote survival to bacterial infection in two ways; by contributing to the innate immune response and by promoting sleep during sickness to aid recovery. The protein is Protein nemuri of Drosophila melanogaster (Fruit fly).